The chain runs to 120 residues: MKEVEKNEIKRLSDRLDAIRHQQADLSLVEAADKYAELEKEKATLEAEIARLREVHSQKLSKEAQKLMKMPFQRAITKKEQADMGKLKKSVRGLVVVHPMTALGREMGLQEMTGFSKTAF.

This is an uncharacterized protein from Escherichia coli O6:H1 (strain CFT073 / ATCC 700928 / UPEC).